We begin with the raw amino-acid sequence, 349 residues long: GATA zinc finger domain-containing protein 24 (349 aa).

Low complexity-rich tracts occupy residues Asn-95 to Asn-169 and Asn-177 to Ser-195. Disordered stretches follow at residues Asn-95–Lys-227 and Asp-250–Gln-294. The segment covering Glu-196–Asn-212 has biased composition (basic and acidic residues). The segment covering Ser-257–Ser-272 has biased composition (low complexity). Residues Lys-278–Lys-289 are compositionally biased toward basic residues. The GATA-type zinc-finger motif lies at Cys-295–Cys-323.

This chain is GATA zinc finger domain-containing protein 24 (gtaX), found in Dictyostelium discoideum (Social amoeba).